The chain runs to 399 residues: Acetylornithine aminotransferase (399 aa).

Pyridoxal 5'-phosphate contacts are provided by residues 99–100 and Phe-132; that span reads GA. Residue Arg-135 coordinates N(2)-acetyl-L-ornithine. A pyridoxal 5'-phosphate-binding site is contributed by 217-220; sequence DEVQ. Lys-246 is modified (N6-(pyridoxal phosphate)lysine). Thr-274 is a binding site for N(2)-acetyl-L-ornithine. Position 275 (Thr-275) interacts with pyridoxal 5'-phosphate.

It belongs to the class-III pyridoxal-phosphate-dependent aminotransferase family. ArgD subfamily. In terms of assembly, homodimer. Pyridoxal 5'-phosphate is required as a cofactor.

The protein localises to the cytoplasm. It carries out the reaction N(2)-acetyl-L-ornithine + 2-oxoglutarate = N-acetyl-L-glutamate 5-semialdehyde + L-glutamate. The protein operates within amino-acid biosynthesis; L-arginine biosynthesis; N(2)-acetyl-L-ornithine from L-glutamate: step 4/4. The polypeptide is Acetylornithine aminotransferase (Agrobacterium fabrum (strain C58 / ATCC 33970) (Agrobacterium tumefaciens (strain C58))).